A 330-amino-acid chain; its full sequence is Methionyl-tRNA formyltransferase (330 aa).

Residue 112-115 (SLLP) participates in (6S)-5,6,7,8-tetrahydrofolate binding.

The protein belongs to the Fmt family.

The catalysed reaction is L-methionyl-tRNA(fMet) + (6R)-10-formyltetrahydrofolate = N-formyl-L-methionyl-tRNA(fMet) + (6S)-5,6,7,8-tetrahydrofolate + H(+). In terms of biological role, attaches a formyl group to the free amino group of methionyl-tRNA(fMet). The formyl group appears to play a dual role in the initiator identity of N-formylmethionyl-tRNA by promoting its recognition by IF2 and preventing the misappropriation of this tRNA by the elongation apparatus. This chain is Methionyl-tRNA formyltransferase, found in Alcanivorax borkumensis (strain ATCC 700651 / DSM 11573 / NCIMB 13689 / SK2).